A 260-amino-acid polypeptide reads, in one-letter code: tRNA pseudouridine synthase A (260 aa).

Catalysis depends on Asp51, which acts as the Nucleophile. Tyr109 is a substrate binding site.

It belongs to the tRNA pseudouridine synthase TruA family. Homodimer.

The enzyme catalyses uridine(38/39/40) in tRNA = pseudouridine(38/39/40) in tRNA. In terms of biological role, formation of pseudouridine at positions 38, 39 and 40 in the anticodon stem and loop of transfer RNAs. This Methylibium petroleiphilum (strain ATCC BAA-1232 / LMG 22953 / PM1) protein is tRNA pseudouridine synthase A.